A 139-amino-acid polypeptide reads, in one-letter code: Heavy metal-associated isoprenylated plant protein 13 (139 aa).

Residues 3-70 (PMKAVLQLSI…LCNTELVSVE (68 aa)) enclose the HMA domain. The tract at residues 70–94 (EVVKPPEKKPEPEKPAPPKPAPAPA) is disordered. The span at 73 to 85 (KPPEKKPEPEKPA) shows a compositional bias: basic and acidic residues. Residue cysteine 136 is modified to Cysteine methyl ester. Cysteine 136 is lipidated: S-farnesyl cysteine. A propeptide spans 137 to 139 (VIM) (removed in mature form).

It belongs to the HIPP family.

Probable heavy-metal-binding protein. The polypeptide is Heavy metal-associated isoprenylated plant protein 13 (Arabidopsis thaliana (Mouse-ear cress)).